Reading from the N-terminus, the 134-residue chain is Bet1-like protein At1g29060 (134 aa).

The span at 1–12 shows a compositional bias: gly residues; the sequence is MASNRGAGGSLY. The tract at residues 1–31 is disordered; it reads MASNRGAGGSLYGGADPYRSREGLSTRNASG. Topologically, residues 1 to 110 are cytoplasmic; sequence MASNRGAGGS…LSIIRSGNNH (110 aa). A t-SNARE coiled-coil homology domain is found at 40-102; that stretch reads DPMHSDLDDE…KNNIRKLNLS (63 aa). Residues 111 to 131 form a helical; Anchor for type IV membrane protein membrane-spanning segment; it reads IMHVVLFALLLFFILYMWSKM. At 132-134 the chain is on the vesicular side; sequence FKR.

This sequence belongs to the BET1 family.

It is found in the golgi apparatus membrane. It localises to the endoplasmic reticulum membrane. Its function is as follows. Required for vesicular transport from the ER to the Golgi complex. Functions as a SNARE associated with ER-derived vesicles. This chain is Bet1-like protein At1g29060, found in Arabidopsis thaliana (Mouse-ear cress).